Consider the following 429-residue polypeptide: Glutamate-1-semialdehyde 2,1-aminomutase (429 aa).

The residue at position 267 (K267) is an N6-(pyridoxal phosphate)lysine.

It belongs to the class-III pyridoxal-phosphate-dependent aminotransferase family. HemL subfamily. As to quaternary structure, homodimer. Requires pyridoxal 5'-phosphate as cofactor.

Its subcellular location is the cytoplasm. It catalyses the reaction (S)-4-amino-5-oxopentanoate = 5-aminolevulinate. The protein operates within porphyrin-containing compound metabolism; protoporphyrin-IX biosynthesis; 5-aminolevulinate from L-glutamyl-tRNA(Glu): step 2/2. This chain is Glutamate-1-semialdehyde 2,1-aminomutase, found in Xanthomonas euvesicatoria pv. vesicatoria (strain 85-10) (Xanthomonas campestris pv. vesicatoria).